The primary structure comprises 689 residues: Protein-glutamine gamma-glutamyltransferase 2 (689 aa).

Residues C278, H336, and D359 contribute to the active site. Residues N399, D401, E437, E447, and E452 each contribute to the Ca(2+) site. Positions 427–453 are disordered; sequence STKSVGRDSREDITHTYKYPEGSEKER. Basic and acidic residues predominate over residues 431-441; that stretch reads VGRDSREDITH. Residue 476–483 coordinates GTP; it reads RIKLSEGA. Position 539 (E539) interacts with Ca(2+). 580-583 serves as a coordination point for GTP; it reads RDVY.

This sequence belongs to the transglutaminase superfamily. Transglutaminase family. In terms of assembly, monomer. The cofactor is Ca(2+). As to expression, predominates in mature erythrocytes. Also found in kidney and cardiac muscle.

The protein resides in the cytoplasm. Its subcellular location is the cytosol. It is found in the nucleus. The protein localises to the chromosome. It localises to the secreted. The protein resides in the extracellular space. Its subcellular location is the extracellular matrix. It is found in the cell membrane. The protein localises to the mitochondrion. It catalyses the reaction L-glutaminyl-[protein] + L-lysyl-[protein] = [protein]-L-lysyl-N(6)-5-L-glutamyl-[protein] + NH4(+). The enzyme catalyses L-glutaminyl-[protein] + serotonin = 5-serotonyl-L-glutamyl-[protein] + NH4(+). It carries out the reaction L-glutaminyl-[protein] + dopamine = 5-dopaminyl-L-glutamyl-[protein] + NH4(+). The catalysed reaction is L-glutaminyl-[protein] + histamine = 5-histaminyl-L-glutamyl-[protein] + NH4(+). It catalyses the reaction L-glutaminyl-[protein] + (R)-noradrenaline = 5-(R)-noradrenalinyl-L-glutamyl-[protein] + NH4(+). The enzyme catalyses L-glutaminyl-[protein] + H2O = L-glutamyl-[protein] + NH4(+). Acyltransferase activity is regulated by the binding of GTP and Ca(2+): inactivated by GTP, which stabilizes its closed structure, thereby obstructing the accessibility of substrates to the active sites. In contrast, Ca(2+) acts as a cofactor by inducing conformational change to the active open form. In absence of Ca(2+), Mg(2+) may bind Ca(2+)-binding sites, promoting GTP-binding and subsequent inhibition of the acyltransferase activity. Functionally, calcium-dependent acyltransferase that catalyzes the formation of covalent bonds between peptide-bound glutamine and various primary amines, such as gamma-amino group of peptide-bound lysine, or mono- and polyamines, thereby producing cross-linked or aminated proteins, respectively. Involved in many biological processes, such as bone development, angiogenesis, wound healing, cellular differentiation, chromatin modification and apoptosis. Acts as a protein-glutamine gamma-glutamyltransferase by mediating the cross-linking of proteins: under physiological conditions, the protein cross-linking activity is inhibited by GTP; inhibition is relieved by Ca(2+) in response to various stresses. When secreted, catalyzes cross-linking of proteins of the extracellular matrix, resulting in the formation of scaffolds. Plays a key role during apoptosis, both by (1) promoting the cross-linking of cytoskeletal proteins resulting in condensation of the cytoplasm, and by (2) mediating cross-linking proteins of the extracellular matrix, resulting in the irreversible formation of scaffolds that stabilize the integrity of the dying cells before their clearance by phagocytosis, thereby preventing the leakage of harmful intracellular components. In addition to protein cross-linking, can use different monoamine substrates to catalyze a vast array of protein post-translational modifications: mediates aminylation of serotonin, dopamine, noradrenaline or histamine into glutamine residues of target proteins to generate protein serotonylation, dopaminylation, noradrenalinylation or histaminylation, respectively. Mediates protein serotonylation of small GTPases during activation and aggregation of platelets, leading to constitutive activation of these GTPases. Plays a key role in chromatin organization by mediating serotonylation and dopaminylation of histone H3. Catalyzes serotonylation of 'Gln-5' of histone H3 (H3Q5ser) during serotonergic neuron differentiation, thereby facilitating transcription. Acts as a mediator of neurotransmission-independent role of nuclear dopamine in ventral tegmental area (VTA) neurons: catalyzes dopaminylation of 'Gln-5' of histone H3 (H3Q5dop), thereby regulating relapse-related transcriptional plasticity in the reward system. Also acts as a protein deamidase by mediating the side chain deamidation of specific glutamine residues of proteins to glutamate. May also act as an isopeptidase cleaving the previously formed cross-links. Also able to participate in signaling pathways independently of its acyltransferase activity: acts as a signal transducer in alpha-1 adrenergic receptor-mediated stimulation of phospholipase C-delta (PLCD) activity and is required for coupling alpha-1 adrenergic agonists to the stimulation of phosphoinositide lipid metabolism. This chain is Protein-glutamine gamma-glutamyltransferase 2, found in Gallus gallus (Chicken).